A 168-amino-acid chain; its full sequence is G/U mismatch-specific DNA glycosylase (168 aa).

The protein belongs to the uracil-DNA glycosylase (UDG) superfamily. TDG/mug family. As to quaternary structure, binds DNA as a monomer.

It is found in the cytoplasm. It carries out the reaction Specifically hydrolyzes mismatched double-stranded DNA and polynucleotides, releasing free uracil.. In terms of biological role, excises ethenocytosine and uracil, which can arise by alkylation or deamination of cytosine, respectively, from the corresponding mispairs with guanine in ds-DNA. It is capable of hydrolyzing the carbon-nitrogen bond between the sugar-phosphate backbone of the DNA and the mispaired base. The complementary strand guanine functions in substrate recognition. Required for DNA damage lesion repair in stationary-phase cells. This Citrobacter koseri (strain ATCC BAA-895 / CDC 4225-83 / SGSC4696) protein is G/U mismatch-specific DNA glycosylase.